Here is a 116-residue protein sequence, read N- to C-terminus: MTRVKRGYVARKRRKNILTLTSGFQGTHSKLFRTANQQGMRALASSHRDRGKRKRNLRRLWITRVNAAARDNGISYNKLIEYLYKKKILLNRKILAQIAILDKFCFSTIIKNIITE.

The protein belongs to the bacterial ribosomal protein bL20 family.

Its subcellular location is the plastid. It is found in the chloroplast. Functionally, binds directly to 23S ribosomal RNA and is necessary for the in vitro assembly process of the 50S ribosomal subunit. It is not involved in the protein synthesizing functions of that subunit. This chain is Large ribosomal subunit protein bL20c (rpl20), found in Marchantia polymorpha (Common liverwort).